Consider the following 394-residue polypeptide: Elongation factor Tu (394 aa).

Positions 10–204 (KPHVNVGTIG…AMDDYIPAPE (195 aa)) constitute a tr-type G domain. Positions 19 to 26 (GHVDHGKT) are G1. 19–26 (GHVDHGKT) provides a ligand contact to GTP. Residue Thr-26 coordinates Mg(2+). The tract at residues 60-64 (GITIN) is G2. Positions 81-84 (DCPG) are G3. Residues 81–85 (DCPGH) and 136–139 (NKCD) contribute to the GTP site. A G4 region spans residues 136–139 (NKCD). The interval 174-176 (SAL) is G5.

This sequence belongs to the TRAFAC class translation factor GTPase superfamily. Classic translation factor GTPase family. EF-Tu/EF-1A subfamily. Monomer.

It is found in the cytoplasm. The enzyme catalyses GTP + H2O = GDP + phosphate + H(+). Its function is as follows. GTP hydrolase that promotes the GTP-dependent binding of aminoacyl-tRNA to the A-site of ribosomes during protein biosynthesis. This Francisella tularensis subsp. holarctica (strain FTNF002-00 / FTA) protein is Elongation factor Tu.